The following is a 253-amino-acid chain: DNA repair protein RecO (253 aa).

The protein belongs to the RecO family.

Functionally, involved in DNA repair and RecF pathway recombination. In Streptococcus agalactiae serotype Ia (strain ATCC 27591 / A909 / CDC SS700), this protein is DNA repair protein RecO.